A 101-amino-acid polypeptide reads, in one-letter code: Urease subunit beta (101 aa).

This sequence belongs to the urease beta subunit family. In terms of assembly, heterotrimer of UreA (gamma), UreB (beta) and UreC (alpha) subunits. Three heterotrimers associate to form the active enzyme.

It localises to the cytoplasm. It carries out the reaction urea + 2 H2O + H(+) = hydrogencarbonate + 2 NH4(+). The protein operates within nitrogen metabolism; urea degradation; CO(2) and NH(3) from urea (urease route): step 1/1. The chain is Urease subunit beta from Acaryochloris marina (strain MBIC 11017).